Reading from the N-terminus, the 864-residue chain is DNA mismatch repair protein MutS (864 aa).

ATP is bound at residue 607 to 614; it reads GPNMGGKS.

It belongs to the DNA mismatch repair MutS family.

Its function is as follows. This protein is involved in the repair of mismatches in DNA. It is possible that it carries out the mismatch recognition step. This protein has a weak ATPase activity. The protein is DNA mismatch repair protein MutS of Neisseria meningitidis serogroup A / serotype 4A (strain DSM 15465 / Z2491).